We begin with the raw amino-acid sequence, 535 residues long: Cytochrome c oxidase subunit 1 (535 aa).

The helical transmembrane segment at 15–37 threads the bilayer; that stretch reads IAILYFIFSTFCGLAGTAMSFII. Ca(2+) contacts are provided by Glu40, Ala43, and Gly45. A run of 5 helical transmembrane segments spans residues 58–80, 147–169, 190–212, 238–260, and 267–289; these read VLVT…IGGF, LAIF…FIVT, ILIT…TMLL, WFFG…SHIV, and PVFG…FLVW. His63 contacts Fe(II)-heme a. His242 serves as a coordination point for Cu cation. The segment at residues 242–246 is a cross-link (1'-histidyl-3'-tyrosine (His-Tyr)); sequence HPEVY. Tyr246 provides a ligand contact to O2. Cu cation contacts are provided by His291 and His292. A run of 2 helical transmembrane segments spans residues 304 to 326 and 339 to 361; these read AYFT…SWLT and MLYT…VLAN. Mg(2+) contacts are provided by His369 and Asp370. 2 helical membrane passes run 376-398 and 415-437; these read THFH…YYWS and FWLI…INGM. Residue His377 participates in heme a3 binding. A Fe(II)-heme a-binding site is contributed by His379. Pro442 provides a ligand contact to Ca(2+). A helical membrane pass occupies residues 452–474; it reads NLVSSFGSMMTIMSLMLFTYIIY.

The protein belongs to the heme-copper respiratory oxidase family. As to quaternary structure, component of the cytochrome c oxidase (complex IV, CIV), a multisubunit enzyme composed of a catalytic core of 3 subunits and several supernumerary subunits. The complex exists as a monomer or a dimer and forms supercomplexes (SCs) in the inner mitochondrial membrane with ubiquinol-cytochrome c oxidoreductase (cytochrome b-c1 complex, complex III, CIII). Heme is required as a cofactor. Cu cation serves as cofactor.

The protein localises to the mitochondrion inner membrane. It carries out the reaction 4 Fe(II)-[cytochrome c] + O2 + 8 H(+)(in) = 4 Fe(III)-[cytochrome c] + 2 H2O + 4 H(+)(out). The protein operates within energy metabolism; oxidative phosphorylation. Its function is as follows. Component of the cytochrome c oxidase, the last enzyme in the mitochondrial electron transport chain which drives oxidative phosphorylation. The respiratory chain contains 3 multisubunit complexes succinate dehydrogenase (complex II, CII), ubiquinol-cytochrome c oxidoreductase (cytochrome b-c1 complex, complex III, CIII) and cytochrome c oxidase (complex IV, CIV), that cooperate to transfer electrons derived from NADH and succinate to molecular oxygen, creating an electrochemical gradient over the inner membrane that drives transmembrane transport and the ATP synthase. Cytochrome c oxidase is the component of the respiratory chain that catalyzes the reduction of oxygen to water. Electrons originating from reduced cytochrome c in the intermembrane space (IMS) are transferred via the dinuclear copper A center (CU(A)) of subunit 2 and heme A of subunit 1 to the active site in subunit 1, a binuclear center (BNC) formed by heme A3 and copper B (CU(B)). The BNC reduces molecular oxygen to 2 water molecules using 4 electrons from cytochrome c in the IMS and 4 protons from the mitochondrial matrix. The sequence is that of Cytochrome c oxidase subunit 1 (COX1) from Eremothecium gossypii (strain ATCC 10895 / CBS 109.51 / FGSC 9923 / NRRL Y-1056) (Yeast).